A 169-amino-acid polypeptide reads, in one-letter code: NADH-quinone oxidoreductase subunit B (169 aa).

Residues C42, C43, C107, and C136 each coordinate [4Fe-4S] cluster.

It belongs to the complex I 20 kDa subunit family. NDH-1 is composed of 14 different subunits. Subunits NuoB, C, D, E, F, and G constitute the peripheral sector of the complex. The cofactor is [4Fe-4S] cluster.

Its subcellular location is the cell inner membrane. The catalysed reaction is a quinone + NADH + 5 H(+)(in) = a quinol + NAD(+) + 4 H(+)(out). Functionally, NDH-1 shuttles electrons from NADH, via FMN and iron-sulfur (Fe-S) centers, to quinones in the respiratory chain. The immediate electron acceptor for the enzyme in this species is believed to be ubiquinone. Couples the redox reaction to proton translocation (for every two electrons transferred, four hydrogen ions are translocated across the cytoplasmic membrane), and thus conserves the redox energy in a proton gradient. The protein is NADH-quinone oxidoreductase subunit B of Sulfurimonas denitrificans (strain ATCC 33889 / DSM 1251) (Thiomicrospira denitrificans (strain ATCC 33889 / DSM 1251)).